The sequence spans 1313 residues: Inter-alpha-trypsin inhibitor heavy chain H6 (1313 aa).

Positions 1–23 (MSGWRYLICVSFLLTILLELTYQ) are cleaved as a signal peptide. The VIT domain maps to 24–150 (GPPVPASSST…EVTFSLAYEE (127 aa)). N-linked (GlcNAc...) asparagine glycosylation is found at N83, N374, N540, and N594. Residues 283 to 469 (NVVFVIDVSS…LQLKGLYEEI (187 aa)) enclose the VWFA domain. 4 disordered regions span residues 612–644 (QPKQ…HGLG), 783–817 (HSKP…TLQV), 856–928 (LKPS…EPLP), and 959–983 (PSRP…SPPN). Polar residues predominate over residues 623-640 (QTSTSAGPDTIMPSSSSR). Positions 864 to 875 (QISTSISLSKPE) are enriched in polar residues. A compositionally biased stretch (pro residues) spans 876-888 (TPNPHMPQTPLPP). Low complexity predominate over residues 907-921 (TISSSTGPSSTTTTS). N971 and N1231 each carry an N-linked (GlcNAc...) asparagine glycan.

This sequence belongs to the ITIH family.

It localises to the secreted. This is Inter-alpha-trypsin inhibitor heavy chain H6 (ITIH6) from Homo sapiens (Human).